The primary structure comprises 100 residues: MAKKSMIEREKKRIKLTKKYALKRATLLKKYQTEESFNLKLELHSKIQKLPRNSAKTRIRNRCWKTGRPRGVFRDFGLSRHVFREMAHQCLLPGVTKSSW.

The protein belongs to the universal ribosomal protein uS14 family. In terms of assembly, part of the 30S ribosomal subunit.

The protein resides in the plastid. The protein localises to the chloroplast. In terms of biological role, binds 16S rRNA, required for the assembly of 30S particles. This Phaeodactylum tricornutum (strain CCAP 1055/1) protein is Small ribosomal subunit protein uS14c.